The sequence spans 417 residues: Serine hydroxymethyltransferase (417 aa).

Residues Leu-121 and 125-127 (GHL) contribute to the (6S)-5,6,7,8-tetrahydrofolate site. Position 229 is an N6-(pyridoxal phosphate)lysine (Lys-229). 355 to 357 (SPF) contacts (6S)-5,6,7,8-tetrahydrofolate.

It belongs to the SHMT family. Homodimer. Requires pyridoxal 5'-phosphate as cofactor.

It is found in the cytoplasm. It catalyses the reaction (6R)-5,10-methylene-5,6,7,8-tetrahydrofolate + glycine + H2O = (6S)-5,6,7,8-tetrahydrofolate + L-serine. It participates in one-carbon metabolism; tetrahydrofolate interconversion. It functions in the pathway amino-acid biosynthesis; glycine biosynthesis; glycine from L-serine: step 1/1. Functionally, catalyzes the reversible interconversion of serine and glycine with tetrahydrofolate (THF) serving as the one-carbon carrier. This reaction serves as the major source of one-carbon groups required for the biosynthesis of purines, thymidylate, methionine, and other important biomolecules. Also exhibits THF-independent aldolase activity toward beta-hydroxyamino acids, producing glycine and aldehydes, via a retro-aldol mechanism. The protein is Serine hydroxymethyltransferase of Xylella fastidiosa (strain M12).